Here is a 187-residue protein sequence, read N- to C-terminus: PBAN-type neuropeptides (187 aa).

Positions 1 to 22 are cleaved as a signal peptide; sequence MSRFYFFFNLICLYLAIKSALS. Residues 23–64 constitute a propeptide that is removed on maturation; the sequence is AELDTNDQKYADLRTTGRGESPDSTGPDSDTLRRDDGAEGLN. Positions 34-43 are enriched in basic and acidic residues; sequence DLRTTGRGES. Positions 34–58 are disordered; sequence DLRTTGRGESPDSTGPDSDTLRRDD. A Leucine amide modification is found at Leu76. Residues 80-127 constitute a propeptide that is removed on maturation; sequence TIAADLHDDLVEEFDAEPLGYAGEPPQKLATELVQGAPYMVLLVTAKP. The segment at 132 to 163 is disordered; sequence PIFYHTTSPRLGRRDSVGENHQRPPFAPRLGR. Residue Leu142 is modified to Leucine amide. The span at 143 to 153 shows a compositional bias: basic and acidic residues; sequence GRRDSVGENHQ. Leu161 and Leu171 each carry leucine amide. A propeptide spanning residues 174 to 187 is cleaved from the precursor; sequence SYNGGYPLPFQFAY.

This sequence belongs to the pyrokinin family.

It localises to the secreted. In terms of biological role, a hormone that controls sex pheromone production in females and pheromone responsiveness in male. Also mediates visceral muscle contractile activity (myotropic activity). The sequence is that of PBAN-type neuropeptides from Anopheles gambiae (African malaria mosquito).